The primary structure comprises 404 residues: Glucose-1-phosphate adenylyltransferase (404 aa).

Alpha-D-glucose 1-phosphate-binding positions include Y99, G164, 179 to 180 (EK), and S197.

This sequence belongs to the bacterial/plant glucose-1-phosphate adenylyltransferase family. As to quaternary structure, homotetramer.

The enzyme catalyses alpha-D-glucose 1-phosphate + ATP + H(+) = ADP-alpha-D-glucose + diphosphate. Its pathway is glycan biosynthesis; glycogen biosynthesis. In terms of biological role, involved in the biosynthesis of ADP-glucose, a building block required for the elongation reactions to produce glycogen. Catalyzes the reaction between ATP and alpha-D-glucose 1-phosphate (G1P) to produce pyrophosphate and ADP-Glc. The chain is Glucose-1-phosphate adenylyltransferase from Rhodococcus jostii (strain RHA1).